The following is an 84-amino-acid chain: Putative movement protein (84 aa).

Residues alanine 15–alanine 35 traverse the membrane as a helical segment.

As to quaternary structure, interacts with the capsid protein (CP). Part of a MP-CP-viral DNA complex.

Its subcellular location is the host membrane. In terms of biological role, involved in the viral transport within, and between cells. This chain is Putative movement protein, found in Miscanthus streak virus (isolate 91) (MiSV).